We begin with the raw amino-acid sequence, 225 residues long: U2 small nuclear ribonucleoprotein B'' (225 aa).

The region spanning 7–86 is the RRM 1 domain; that stretch reads HTIYINNMND…KPMRIQYAKT (80 aa). The tract at residues 100–144 is disordered; that stretch reads DKEKKKEKKKAKTMEQAAAAANKKPGQGTPNAANTQGTAAPNPQV. Lys111 is modified (N6-acetyllysine; alternate). Lys111 participates in a covalent cross-link: Glycyl lysine isopeptide (Lys-Gly) (interchain with G-Cter in SUMO2); alternate. The segment covering 113–123 has biased composition (low complexity); the sequence is MEQAAAAANKK. Residues 127–140 are compositionally biased toward polar residues; it reads GTPNAANTQGTAAP. Position 151 is a phosphotyrosine (Tyr151). Residues 151–225 enclose the RRM 2 domain; sequence YILFLNNLPE…HAMKITYAKK (75 aa).

This sequence belongs to the RRM U1 A/B'' family. In terms of assembly, identified in the spliceosome B complex. Identified in the spliceosome C complex. Present in a spliceosome complex assembled in vitro, and composed of SNRPB2, HPRP8BP and CRNKL1. Contributes to the binding of stem loop IV of U2 snRNA with SNRPP1.

Its subcellular location is the nucleus. Involved in pre-mRNA splicing as component of the spliceosome. Associated with sn-RNP U2, where it contributes to the binding of stem loop IV of U2 snRNA. The chain is U2 small nuclear ribonucleoprotein B'' (Snrpb2) from Mus musculus (Mouse).